The primary structure comprises 407 residues: uncharacterized protein (407 aa).

Positions 10 to 37 (DKLEQLANDVVTELTDMENKYKDLHVEL) form a coiled coil.

This is an uncharacterized protein from Bacillus subtilis (strain 168).